Reading from the N-terminus, the 251-residue chain is Extracellular superoxide dismutase [Cu-Zn] (251 aa).

The first 15 residues, 1–15 (MLAFLFYGLLLAACG), serve as a signal peptide directing secretion. Positions 16–24 (SVTMSNPGE) are excised as a propeptide. Disulfide bonds link C77–C222 and C139–C221. A glycan (N-linked (GlcNAc...) asparagine) is linked at N121. Cu cation is bound by residues H128, H130, and H145. Zn(2+)-binding residues include H145, H153, H156, and D159. Cu cation is bound at residue H195. Positions 230–251 (AAWESQTKERKKRRRESECKTT) are disordered.

It belongs to the Cu-Zn superoxide dismutase family. In terms of assembly, homotetramer. Directly interacts with ATP7A/MNK; this interaction is copper-dependent and is required for SOD3 activity. Requires Cu cation as cofactor. The cofactor is Zn(2+).

It localises to the secreted. It is found in the extracellular space. The protein localises to the golgi apparatus. The protein resides in the trans-Golgi network. It catalyses the reaction 2 superoxide + 2 H(+) = H2O2 + O2. Functionally, protect the extracellular space from toxic effect of reactive oxygen intermediates by converting superoxide radicals into hydrogen peroxide and oxygen. This Mus musculus (Mouse) protein is Extracellular superoxide dismutase [Cu-Zn] (Sod3).